The primary structure comprises 339 residues: UDP-galactose transporter homolog 1 (339 aa).

9 helical membrane passes run 5–25, 43–63, 91–111, 138–158, 171–191, 208–228, 246–268, 273–295, and 301–321; these read ILKHVFAVGGIYCSFLTWGLL, VPYIVALVQATIAMICGLIYI, AISAPLAAYSLSYVDFLTYML, LVVLLVTVGITIFTLDGHKPS, SSLIGFVLLGSSLFLDGLTNA, HLMFALNFFLIVWNVIYMVLV, ISRYLLAYACCGAIGQCFIFYTL, SLVLVMVTVTRKMFSMILSIIVY, and LWQWVGIVIVFTGVVCESMGK.

It belongs to the nucleotide-sugar transporter family. SLC35B subfamily.

The protein localises to the endoplasmic reticulum membrane. Functionally, may be involved in specific transport of UDP-Gal from the cytosol to the Golgi lumen. Involved in the maintenance of optimal conditions for the folding of secretory pathway proteins in the endoplasmic reticulum. This is UDP-galactose transporter homolog 1 (HUT1) from Kluyveromyces lactis (strain ATCC 8585 / CBS 2359 / DSM 70799 / NBRC 1267 / NRRL Y-1140 / WM37) (Yeast).